A 189-amino-acid polypeptide reads, in one-letter code: Peptidyl-tRNA hydrolase (189 aa).

Tyr15 is a tRNA binding site. His20 (proton acceptor) is an active-site residue. The tRNA site is built by Phe66, Asn68, and Asn114.

This sequence belongs to the PTH family. In terms of assembly, monomer.

The protein localises to the cytoplasm. The catalysed reaction is an N-acyl-L-alpha-aminoacyl-tRNA + H2O = an N-acyl-L-amino acid + a tRNA + H(+). In terms of biological role, hydrolyzes ribosome-free peptidyl-tRNAs (with 1 or more amino acids incorporated), which drop off the ribosome during protein synthesis, or as a result of ribosome stalling. Its function is as follows. Catalyzes the release of premature peptidyl moieties from peptidyl-tRNA molecules trapped in stalled 50S ribosomal subunits, and thus maintains levels of free tRNAs and 50S ribosomes. The protein is Peptidyl-tRNA hydrolase of Streptococcus thermophilus (strain CNRZ 1066).